Here is a 748-residue protein sequence, read N- to C-terminus: EF-hand domain-containing family member C2 (748 aa).

DM10 domains are found at residues 75 to 182 (DKQV…VKMG), 226 to 366 (DRQV…RSKY), and 428 to 535 (VSNV…EQHA). EF-hand domains follow at residues 556–591 (EQQK…LDVE) and 631–666 (EKFS…FRLP).

It is found in the cytoplasm. The protein resides in the cytoskeleton. The protein localises to the cilium axoneme. Functionally, microtubule inner protein (MIP) part of the dynein-decorated doublet microtubules (DMTs) in cilia axoneme, which is required for motile cilia beating. This Danio rerio (Zebrafish) protein is EF-hand domain-containing family member C2 (efhc2).